The chain runs to 213 residues: Holliday junction branch migration complex subunit RuvA (213 aa).

The segment at 1-63 (MIGMLTGRVA…EDAFKLYGFL (63 aa)) is domain I. The interval 64–142 (DDIDRAWFVH…PTGRSFSIGL (79 aa)) is domain II. Positions 143–160 (PVHSDDGTTGGAPVAPAG) are flexible linker. Residues 161–213 (GDSLAREDAVSALVNLGYNESQARQAVAKILRDADSEAPLGDVIRLSLKELAA) are domain III.

It belongs to the RuvA family. In terms of assembly, homotetramer. Forms an RuvA(8)-RuvB(12)-Holliday junction (HJ) complex. HJ DNA is sandwiched between 2 RuvA tetramers; dsDNA enters through RuvA and exits via RuvB. An RuvB hexamer assembles on each DNA strand where it exits the tetramer. Each RuvB hexamer is contacted by two RuvA subunits (via domain III) on 2 adjacent RuvB subunits; this complex drives branch migration. In the full resolvosome a probable DNA-RuvA(4)-RuvB(12)-RuvC(2) complex forms which resolves the HJ.

It is found in the cytoplasm. The RuvA-RuvB-RuvC complex processes Holliday junction (HJ) DNA during genetic recombination and DNA repair, while the RuvA-RuvB complex plays an important role in the rescue of blocked DNA replication forks via replication fork reversal (RFR). RuvA specifically binds to HJ cruciform DNA, conferring on it an open structure. The RuvB hexamer acts as an ATP-dependent pump, pulling dsDNA into and through the RuvAB complex. HJ branch migration allows RuvC to scan DNA until it finds its consensus sequence, where it cleaves and resolves the cruciform DNA. The protein is Holliday junction branch migration complex subunit RuvA of Maricaulis maris (strain MCS10) (Caulobacter maris).